The primary structure comprises 151 residues: Mini-ribonuclease 3 (151 aa).

The active site involves Asp28.

This sequence belongs to the MrnC RNase family. Homodimer. Mg(2+) is required as a cofactor.

The protein resides in the cytoplasm. In terms of biological role, involved in correct processing of both the 5' and 3' ends of 23S rRNA precursor. Processes 30S rRNA precursor transcript even in absence of ribonuclease 3 (Rnc); Rnc processes 30S rRNA into smaller rRNA precursors. This Clostridium tetani (strain Massachusetts / E88) protein is Mini-ribonuclease 3.